The chain runs to 361 residues: D-alanine--D-alanine ligase (361 aa).

In terms of domain architecture, ATP-grasp spans K149–Q353. An ATP-binding site is contributed by K176 to E231. The Mg(2+) site is built by D308, E320, and N322.

The protein belongs to the D-alanine--D-alanine ligase family. The cofactor is Mg(2+). It depends on Mn(2+) as a cofactor.

The protein resides in the cytoplasm. The enzyme catalyses 2 D-alanine + ATP = D-alanyl-D-alanine + ADP + phosphate + H(+). The protein operates within cell wall biogenesis; peptidoglycan biosynthesis. Functionally, cell wall formation. The chain is D-alanine--D-alanine ligase from Corynebacterium efficiens (strain DSM 44549 / YS-314 / AJ 12310 / JCM 11189 / NBRC 100395).